Consider the following 85-residue polypeptide: MKLFFYLLIVYKKYYSSGGDIETAYNCLISFRLLAVSYVLSSLILEHLGNRIDILEAVWVEDLVNSDPIISHTGANEISEIITSG.

This is an uncharacterized protein from Fowlpox virus (strain NVSL) (FPV).